Consider the following 80-residue polypeptide: Small ribosomal subunit protein uS17 (80 aa).

This sequence belongs to the universal ribosomal protein uS17 family. In terms of assembly, part of the 30S ribosomal subunit.

Its function is as follows. One of the primary rRNA binding proteins, it binds specifically to the 5'-end of 16S ribosomal RNA. This chain is Small ribosomal subunit protein uS17, found in Chelativorans sp. (strain BNC1).